The primary structure comprises 513 residues: ATP synthase subunit alpha (513 aa).

169–176 (GDRQCGKT) serves as a coordination point for ATP.

This sequence belongs to the ATPase alpha/beta chains family. In terms of assembly, F-type ATPases have 2 components, CF(1) - the catalytic core - and CF(0) - the membrane proton channel. CF(1) has five subunits: alpha(3), beta(3), gamma(1), delta(1), epsilon(1). CF(0) has three main subunits: a(1), b(2) and c(9-12). The alpha and beta chains form an alternating ring which encloses part of the gamma chain. CF(1) is attached to CF(0) by a central stalk formed by the gamma and epsilon chains, while a peripheral stalk is formed by the delta and b chains.

It localises to the cell inner membrane. It catalyses the reaction ATP + H2O + 4 H(+)(in) = ADP + phosphate + 5 H(+)(out). Its function is as follows. Produces ATP from ADP in the presence of a proton gradient across the membrane. The alpha chain is a regulatory subunit. The sequence is that of ATP synthase subunit alpha from Burkholderia cenocepacia (strain ATCC BAA-245 / DSM 16553 / LMG 16656 / NCTC 13227 / J2315 / CF5610) (Burkholderia cepacia (strain J2315)).